Consider the following 485-residue polypeptide: TQRDTLTKGMTQGQIVAGPDDTKIDQSIMDQGVCATIALPFDIHVAQSVKNVMFMFAWTQKHGLAVNNLVILGVPGYLNMWKRFGESTDEPSESSKRCCYEKPTDPVSGEIVTPAFDPADEISEITHQEESADIKPVRLLDARLLGYTWVTQNHSWIVAYSDEPIKDGNEVVTLRNIGNNNFCDALRKCTDKSACIHQYLQFAWNSFGDPTVRTRQVVFEVVGWADSDTTNNNSDTLFYRTTQADNWQVLTESKTNTIGLAEVDWFNFKYETKQEVSIEIARQTWTSTLNAGVSTVSRVPKVPIKVKINVDTFLKVLFAVYKADLYDIFLQFASVFKKGGNRQYWLNYTQEPNTKSNYNHKIYNDKIRYLQEDVQVHPNETQSKWWWWSFKKVALTTMTVVALTRFKASGINGQYISARQFSGGETVSPYRLAAPFDSCLWRRSPNPLGTDGLKVALAHHPLAGASNRNKLRVSIPAQCICSITA.

2 cysteine pairs are disulfide-bonded: cysteine 34–cysteine 98 and cysteine 183–cysteine 189.

This sequence belongs to the aerolysin family. As to quaternary structure, oligomerizes as a hexamer. In terms of processing, the N-terminus is blocked.

Cytolytic protein with insecticidal activity. Acts as a pro-inflammatory agent. The sequence is that of Cytolytic protein enterolobin from Enterolobium contortisiliquum (Pacara earpod tree).